A 542-amino-acid chain; its full sequence is Cytochrome P450 monooxygenase 91 (542 aa).

Positions 1–22 (MLDILRFVLICGILWILRRVLL) are cleaved as a signal peptide. Residues N299 and N392 are each glycosylated (N-linked (GlcNAc...) asparagine). Residue C482 participates in heme binding.

It belongs to the cytochrome P450 family. Heme is required as a cofactor.

Its pathway is secondary metabolite biosynthesis. Functionally, cytochrome P450 monooxygenase that is able to use dehydroabietic acid as a substrate for oxidation. This Postia placenta (strain ATCC 44394 / Madison 698-R) (Brown rot fungus) protein is Cytochrome P450 monooxygenase 91.